The sequence spans 198 residues: Large ribosomal subunit protein bL25 (198 aa).

It belongs to the bacterial ribosomal protein bL25 family. CTC subfamily. As to quaternary structure, part of the 50S ribosomal subunit; part of the 5S rRNA/L5/L18/L25 subcomplex. Contacts the 5S rRNA. Binds to the 5S rRNA independently of L5 and L18.

This is one of the proteins that binds to the 5S RNA in the ribosome where it forms part of the central protuberance. In Phocaeicola vulgatus (strain ATCC 8482 / DSM 1447 / JCM 5826 / CCUG 4940 / NBRC 14291 / NCTC 11154) (Bacteroides vulgatus), this protein is Large ribosomal subunit protein bL25.